A 273-amino-acid chain; its full sequence is DnaJ homolog subfamily C member 27 (273 aa).

The required for interaction with MAPK1 stretch occupies residues 1-18 (METNVPKRKEPAKSLRIK). Residues 23–30 (GNAEVGKS), 71–75 (DMAGH), and 134–137 (NKID) each bind GTP. Residues 217–273 (DSWEMLGVRPGASREEVNKAYRKLAVLLHPDKCVAPGSEDAFKAVVNARTALLKNIK) enclose the J domain.

It belongs to the small GTPase superfamily. Rab family. Interacts directly with MAPK1 (wild-type and kinase-deficient forms). Interacts directly (in GTP-bound form) with MAP2K1 (wild-type and kinase-deficient forms).

The protein localises to the nucleus. GTPase which can activate the MEK/ERK pathway and induce cell transformation when overexpressed. May act as a nuclear scaffold for MAPK1, probably by association with MAPK1 nuclear export signal leading to enhanced ERK1/ERK2 signaling. This chain is DnaJ homolog subfamily C member 27 (Dnajc27), found in Mus musculus (Mouse).